Consider the following 382-residue polypeptide: Sphingosine kinase 1 (382 aa).

The region spanning 12–159 is the DAGKc domain; that stretch reads PRPCRVLVLL…MNLLSLHTAS (148 aa). ATP-binding positions include 22-24 and 54-58; these read NPQ and TERKN. 79–82 contributes to the substrate binding site; sequence SGDG. Catalysis depends on D81, which acts as the Proton donor/acceptor. ATP-binding positions include E86 and 111-113; that span reads GSG. 2 short sequence motifs (nuclear export signal) span residues 147–155 and 161–169; these read LSPMNLLSL and LRLYSVLSL. D178 lines the substrate pocket. Residues R185 and R191 each coordinate ATP. A Phosphothreonine modification is found at T193. Position 225 is a phosphoserine (S225). 340–342 lines the ATP pocket; that stretch reads DGE.

Interacts with ACY1. Binds to calmodulin. Interacts with SPHKAP. Interacts with CIB1, the interaction occurs in a calcium-dependent manner. Interacts with TRAF2. Interacts with EEF1A1; the interaction enhances SPHK1 kinase activity. Requires Mg(2+) as cofactor. As to expression, widely expressed. Expressed in brain (at protein level). Detected in neurons.

The protein resides in the cytoplasm. Its subcellular location is the endosome membrane. It localises to the nucleus. It is found in the cell membrane. The protein localises to the synapse. It carries out the reaction a sphingoid base + ATP = a sphingoid 1-phosphate + ADP + H(+). The enzyme catalyses L-seryl-[protein] + acetyl-CoA = O-acetyl-L-seryl-[protein] + CoA. It catalyses the reaction sphinganine + ATP = sphinganine 1-phosphate + ADP + H(+). The catalysed reaction is sphing-4-enine + ATP = sphing-4-enine 1-phosphate + ADP + H(+). It carries out the reaction 1-O-hexadecyl-2-amino-sn-glycerol + ATP = 1-O-hexadecyl-2-desoxy-2-amino-sn-glycero-3-phosphate + ADP + H(+). Its activity is regulated as follows. Acetyltransferase activity increases in presence of the kinase substrate, sphingosine. In Purkinje cells, kinase activity on sphingosine increases in presence of VEGFA. In neurons, kinase activity increases during the first 24h in presence of Amyloid-beta protein 42 to decrease after 96h. Catalyzes the phosphorylation of sphingosine to form sphingosine 1-phosphate (SPP), a lipid mediator with both intra- and extracellular functions. Also acts on D-erythro-sphingosine and to a lesser extent sphinganine, but not other lipids, such as D,L-threo-dihydrosphingosine, N,N-dimethylsphingosine, diacylglycerol, ceramide, or phosphatidylinositol. In contrast to proapoptotic SPHK2, has a negative effect on intracellular ceramide levels, enhances cell growth and inhibits apoptosis. Involved in the regulation of inflammatory response and neuroinflammation. Via the product sphingosine 1-phosphate, stimulates TRAF2 E3 ubiquitin ligase activity, and promotes activation of NF-kappa-B in response to TNF signaling. In response to TNF and in parallel to NF-kappa-B activation, negatively regulates RANTES induction through p38 MAPK signaling pathway. Involved in endocytic membrane trafficking induced by sphingosine, recruited to dilate endosomes, also plays a role on later stages of endosomal maturation and membrane fusion independently of its kinase activity. In Purkinje cells, seems to be also involved in the regulation of autophagosome-lysosome fusion upon VEGFA. Its function is as follows. Has serine acetyltransferase activity on PTGS2/COX2 in an acetyl-CoA dependent manner. The acetyltransferase activity increases in presence of the kinase substrate, sphingosine. During neuroinflammation, through PTGS2 acetylation, promotes neuronal secretion of specialized preresolving mediators (SPMs), especially 15-R-lipoxin A4, which results in an increase of phagocytic microglia. The protein is Sphingosine kinase 1 of Mus musculus (Mouse).